The chain runs to 697 residues: Elongation factor G 2 (697 aa).

Positions 5-280 (SKYRNIGIFA…AVVDYLPAPD (276 aa)) constitute a tr-type G domain. GTP is bound by residues 14–21 (AHVDAGKT), 78–82 (DTPGH), and 132–135 (NKLD).

Belongs to the TRAFAC class translation factor GTPase superfamily. Classic translation factor GTPase family. EF-G/EF-2 subfamily.

The protein resides in the cytoplasm. Catalyzes the GTP-dependent ribosomal translocation step during translation elongation. During this step, the ribosome changes from the pre-translocational (PRE) to the post-translocational (POST) state as the newly formed A-site-bound peptidyl-tRNA and P-site-bound deacylated tRNA move to the P and E sites, respectively. Catalyzes the coordinated movement of the two tRNA molecules, the mRNA and conformational changes in the ribosome. The protein is Elongation factor G 2 of Shewanella sp. (strain MR-7).